The following is a 331-amino-acid chain: GTP-binding protein RHO5 (331 aa).

10–17 (GDGAVGKT) serves as a coordination point for GTP. Positions 51–76 (ASSPLELDNGNDKRGSLSSASSSPST) are disordered. Residues 66–75 (SLSSASSSPS) are compositionally biased toward low complexity. GTP contacts are provided by residues 87–91 (DTAGQ) and 156–159 (TKSD). Phosphoserine occurs at positions 223 and 228. A phosphothreonine mark is found at Thr-232 and Thr-244. Residues 239–331 (TATTNTNGDK…KKKKSKCVIL (93 aa)) are disordered. The span at 258-273 (HHNNSTDSTLPKGSLQ) shows a compositional bias: polar residues. A Glycyl lysine isopeptide (Lys-Gly) (interchain with G-Cter in ubiquitin) cross-link involves residue Lys-276. Basic and acidic residues predominate over residues 287–297 (GQKDKIHEQSK). Residues 308–331 (HHNKQAKPKTRNDKKKKKSKCVIL) show a composition bias toward basic residues. Cys-328 is subject to Cysteine methyl ester. Cys-328 carries S-geranylgeranyl cysteine lipidation. A propeptide spans 329 to 331 (VIL) (removed in mature form).

Belongs to the small GTPase superfamily. Rho family. As to quaternary structure, interacts with RGD2.

Its subcellular location is the membrane. It localises to the mitochondrion. Small GTPase that negatively regulates a MAP kinase branch, downstream of SLT2, of the PKC1-mediated signal transduction pathway. With its specific guanine nucleotide exchange factor (GEF), the heterodimeric complex DCK1/LMO1, relocates to mitochondria upon oxidative stress and triggers cell death. The DCK1/LMO1/RHO5 signaling module that mediates mitochondrial turnover under nitrogen starvation conditions via mitophagy. The DCK1/LMO1/RHO5 signaling module also plays a role in cell wall integrity signaling. The sequence is that of GTP-binding protein RHO5 from Saccharomyces cerevisiae (strain ATCC 204508 / S288c) (Baker's yeast).